The chain runs to 932 residues: Ribosome biogenesis protein ERB1 (932 aa).

Residues 1-18 (MVRPSSSSSASASAARSG) show a composition bias toward low complexity. Residues 1–229 (MVRPSSSSSA…RSQAAQAFDL (229 aa)) form a disordered region. A compositionally biased stretch (polar residues) spans 27–36 (PTATNPTTRA). 2 stretches are compositionally biased toward acidic residues: residues 57-119 (VSDD…EVDS) and 150-172 (DNSD…DEDE). The span at 175–184 (SAFAARSDAS) shows a compositional bias: low complexity. WD repeat units lie at residues 555–594 (PDGG…CTAS) and 604–644 (AERS…NYAK). A disordered region spans residues 679-698 (SMPSKPDARSPVAWTRPSEA). WD repeat units lie at residues 762 to 800 (SKGS…LIKT), 803 to 842 (SGFK…RPYK), 846 to 885 (YHAR…DYGE), and 901 to 932 (KNGL…LWTT).

It belongs to the WD repeat BOP1/ERB1 family. In terms of assembly, component of the NOP7 complex, composed of ERB1, NOP7 and YTM1. The complex is held together by ERB1, which interacts with NOP7 via its N-terminal domain and with YTM1 via a high-affinity interaction between the seven-bladed beta-propeller domains of the 2 proteins. The NOP7 complex associates with the 66S pre-ribosome.

The protein resides in the nucleus. Its subcellular location is the nucleolus. The protein localises to the nucleoplasm. Component of the NOP7 complex, which is required for maturation of the 25S and 5.8S ribosomal RNAs and formation of the 60S ribosome. This Mycosarcoma maydis (Corn smut fungus) protein is Ribosome biogenesis protein ERB1.